A 199-amino-acid polypeptide reads, in one-letter code: GTP cyclohydrolase-2 (199 aa).

52–56 (RMHSE) is a binding site for GTP. Zn(2+) contacts are provided by Cys-57, Cys-68, and Cys-70. GTP is bound by residues Gln-73, 94–96 (EGR), and Thr-116. Asp-128 (proton acceptor) is an active-site residue. Arg-130 (nucleophile) is an active-site residue. 2 residues coordinate GTP: Thr-151 and Lys-156.

This sequence belongs to the GTP cyclohydrolase II family. The cofactor is Zn(2+).

It catalyses the reaction GTP + 4 H2O = 2,5-diamino-6-hydroxy-4-(5-phosphoribosylamino)-pyrimidine + formate + 2 phosphate + 3 H(+). The protein operates within cofactor biosynthesis; riboflavin biosynthesis; 5-amino-6-(D-ribitylamino)uracil from GTP: step 1/4. Its function is as follows. Catalyzes the conversion of GTP to 2,5-diamino-6-ribosylamino-4(3H)-pyrimidinone 5'-phosphate (DARP), formate and pyrophosphate. In Aliivibrio fischeri (strain ATCC 700601 / ES114) (Vibrio fischeri), this protein is GTP cyclohydrolase-2.